The following is a 417-amino-acid chain: Serine hydroxymethyltransferase (417 aa).

(6S)-5,6,7,8-tetrahydrofolate contacts are provided by residues Leu-121 and 125-127 (GHL). Lys-229 carries the N6-(pyridoxal phosphate)lysine modification. (6S)-5,6,7,8-tetrahydrofolate is bound at residue 355–357 (SPF).

Belongs to the SHMT family. In terms of assembly, homodimer. Requires pyridoxal 5'-phosphate as cofactor.

It localises to the cytoplasm. The catalysed reaction is (6R)-5,10-methylene-5,6,7,8-tetrahydrofolate + glycine + H2O = (6S)-5,6,7,8-tetrahydrofolate + L-serine. The protein operates within one-carbon metabolism; tetrahydrofolate interconversion. Its pathway is amino-acid biosynthesis; glycine biosynthesis; glycine from L-serine: step 1/1. In terms of biological role, catalyzes the reversible interconversion of serine and glycine with tetrahydrofolate (THF) serving as the one-carbon carrier. This reaction serves as the major source of one-carbon groups required for the biosynthesis of purines, thymidylate, methionine, and other important biomolecules. Also exhibits THF-independent aldolase activity toward beta-hydroxyamino acids, producing glycine and aldehydes, via a retro-aldol mechanism. The sequence is that of Serine hydroxymethyltransferase from Photorhabdus laumondii subsp. laumondii (strain DSM 15139 / CIP 105565 / TT01) (Photorhabdus luminescens subsp. laumondii).